A 407-amino-acid chain; its full sequence is 1-deoxy-D-xylulose 5-phosphate reductoisomerase (407 aa).

NADPH-binding residues include T25, G26, S27, I28, N53, and N136. Position 137 (K137) interacts with 1-deoxy-D-xylulose 5-phosphate. Residue E138 participates in NADPH binding. D162 provides a ligand contact to Mn(2+). 1-deoxy-D-xylulose 5-phosphate is bound by residues S163, E164, S188, and H211. Position 164 (E164) interacts with Mn(2+). G217 serves as a coordination point for NADPH. 1-deoxy-D-xylulose 5-phosphate-binding residues include S224, N229, K230, and E233. E233 is a Mn(2+) binding site.

Belongs to the DXR family. Mg(2+) serves as cofactor. The cofactor is Mn(2+).

It catalyses the reaction 2-C-methyl-D-erythritol 4-phosphate + NADP(+) = 1-deoxy-D-xylulose 5-phosphate + NADPH + H(+). The protein operates within isoprenoid biosynthesis; isopentenyl diphosphate biosynthesis via DXP pathway; isopentenyl diphosphate from 1-deoxy-D-xylulose 5-phosphate: step 1/6. In terms of biological role, catalyzes the NADPH-dependent rearrangement and reduction of 1-deoxy-D-xylulose-5-phosphate (DXP) to 2-C-methyl-D-erythritol 4-phosphate (MEP). The polypeptide is 1-deoxy-D-xylulose 5-phosphate reductoisomerase (Nitrobacter winogradskyi (strain ATCC 25391 / DSM 10237 / CIP 104748 / NCIMB 11846 / Nb-255)).